The following is an 872-amino-acid chain: DNA polymerase 1 (872 aa).

Belongs to the DNA polymerase type-B family.

The catalysed reaction is DNA(n) + a 2'-deoxyribonucleoside 5'-triphosphate = DNA(n+1) + diphosphate. In Sulfurisphaera ohwakuensis, this protein is DNA polymerase 1 (pol-alpha).